A 124-amino-acid chain; its full sequence is Aspartate 1-decarboxylase (124 aa).

S25 acts as the Schiff-base intermediate with substrate; via pyruvic acid in catalysis. At S25 the chain carries Pyruvic acid (Ser). T57 provides a ligand contact to substrate. The active-site Proton donor is Y58. 73–75 lines the substrate pocket; that stretch reads GAA.

This sequence belongs to the PanD family. Heterooctamer of four alpha and four beta subunits. Requires pyruvate as cofactor. In terms of processing, is synthesized initially as an inactive proenzyme, which is activated by self-cleavage at a specific serine bond to produce a beta-subunit with a hydroxyl group at its C-terminus and an alpha-subunit with a pyruvoyl group at its N-terminus.

Its subcellular location is the cytoplasm. It carries out the reaction L-aspartate + H(+) = beta-alanine + CO2. It participates in cofactor biosynthesis; (R)-pantothenate biosynthesis; beta-alanine from L-aspartate: step 1/1. Functionally, catalyzes the pyruvoyl-dependent decarboxylation of aspartate to produce beta-alanine. The protein is Aspartate 1-decarboxylase of Syntrophobacter fumaroxidans (strain DSM 10017 / MPOB).